Consider the following 661-residue polypeptide: MWHLLVWIILLATAQQMITEGCPAGCQCNTPQTVFCLARKNSNFPRSVPPDTLNLYVFENGISSIEESSFIGLNGLHLLDLSHNQLSSLPGGVFRNLANLSNLDLTSNQLTEISADTFQGLSRLERLYLNGNRIRSIHPEAFKGIESLLELKLSNNQLVTPPAFSLPHLLLLDLSYNAIPVIQQGVFNAGNIESLRLAGLGLKEVPEELLSGLKNLHELDLSDNQLDKVPPGLHGLTKLNIAGNVGFSQIQVDDLSNLPALQELDLSGLSLQTLPKGLFRSSKRLRAVSLAQNPFNCVCSLGWLSEWMRVSGVVLLRPDETRCHFPPKNAGKTLRQLRDSEYGCPAPTTIQMPSTMPPSTTTGPPTTTKHLQTEAPTTASTTTTTIPHQEQEEDTQPFQFDFEDTLCPPQTCLNGGSCHLDPTGQLECECPPGFQGTYCETGPVTPAVVTEMYIEQVKIIEVTVSSIRVDLQSYSQNKEKLRAIRLTVRNLYGADRRPMIYKLPPTLPEYTVRALSSNSSYWVCLGSQGEGGPEEDLCTETHTLGEPPKHSPQVTQSQEGNLTLVLVPAVAAGILLSAAVAAAACYARRRKGKGHSVEDGGPLEMDGVKKGLDGKGEVKKLSEDPTGPEKTGAESEEPLMDSTRIGNNNDAPTGRLPHSYF.

Residues Met1 to Thr19 form the signal peptide. Residues Glu20–Pro50 form the LRRNT domain. The Extracellular portion of the chain corresponds to Glu20–Thr563. 10 LRR repeats span residues Thr52–Gly72, Gly75–Asn96, Asn99–Gly120, Arg123–Gly144, Ser147–His168, Leu169–Ala189, Asn191–Gly212, Asn215–Thr237, Lys238–Leu258, and Pro259–Ser281. Residue Asn99 is glycosylated (N-linked (GlcNAc...) asparagine). One can recognise an LRRCT domain in the interval Asn293–Ala346. The span at Thr348–Thr385 shows a compositional bias: low complexity. The interval Thr348 to Thr395 is disordered. An EGF-like domain is found at Glu403–Glu440. 3 disulfides stabilise this stretch: Cys407–Cys418, Cys412–Cys428, and Cys430–Cys439. The 89-residue stretch at Glu455–Thr543 folds into the Fibronectin type-III domain. Asn518 and Asn561 each carry an N-linked (GlcNAc...) asparagine glycan. The chain crosses the membrane as a helical span at residues Leu564–Ala584. The Cytoplasmic portion of the chain corresponds to Cys585–Phe661. The segment at Lys591 to Phe661 is disordered. A compositionally biased stretch (basic and acidic residues) spans Asp606–Glu623.

The protein localises to the membrane. Its function is as follows. May act as an inhibitor of TGF-beta signaling. The sequence is that of Vasorin (vasn) from Xenopus tropicalis (Western clawed frog).